A 459-amino-acid polypeptide reads, in one-letter code: LAS seventeen-binding protein 3 (459 aa).

A disordered region spans residues Arg219–Pro403. Ser227 is modified (phosphoserine). The segment covering Asp229–Tyr242 has biased composition (acidic residues). Residues Asn243–Arg262 are compositionally biased toward low complexity. Residues Tyr289–Ser300 are compositionally biased toward polar residues. Position 298 is a phosphothreonine (Thr298). Phosphoserine occurs at positions 300 and 303. Over residues Asp340 to Glu350 the composition is skewed to acidic residues. Residues Ser351–Ser371 are compositionally biased toward basic and acidic residues. The span at Asn372–Arg391 shows a compositional bias: polar residues. Thr393 is subject to Phosphothreonine. Residues Thr393–Pro403 are compositionally biased toward low complexity. 3 positions are modified to phosphoserine: Ser397, Ser402, and Ser416. The 60-residue stretch at Thr400–Val459 folds into the SH3 domain.

The protein belongs to the SH3YL1 family. In terms of assembly, interacts with LAS17. In terms of processing, phosphorylation of Ser-397 is induced 2-fold in response to mating pheromone.

Its subcellular location is the cytoplasm. The protein is LAS seventeen-binding protein 3 (LSB3) of Saccharomyces cerevisiae (strain YJM789) (Baker's yeast).